Here is a 668-residue protein sequence, read N- to C-terminus: tRNA 5-methylaminomethyl-2-thiouridine biosynthesis bifunctional protein MnmC (668 aa).

The tract at residues Met-1 to Glu-245 is tRNA (mnm(5)s(2)U34)-methyltransferase. The FAD-dependent cmnm(5)s(2)U34 oxidoreductase stretch occupies residues Ile-270 to Gly-668.

It in the N-terminal section; belongs to the methyltransferase superfamily. tRNA (mnm(5)s(2)U34)-methyltransferase family. This sequence in the C-terminal section; belongs to the DAO family. FAD serves as cofactor.

It localises to the cytoplasm. The catalysed reaction is 5-aminomethyl-2-thiouridine(34) in tRNA + S-adenosyl-L-methionine = 5-methylaminomethyl-2-thiouridine(34) in tRNA + S-adenosyl-L-homocysteine + H(+). Catalyzes the last two steps in the biosynthesis of 5-methylaminomethyl-2-thiouridine (mnm(5)s(2)U) at the wobble position (U34) in tRNA. Catalyzes the FAD-dependent demodification of cmnm(5)s(2)U34 to nm(5)s(2)U34, followed by the transfer of a methyl group from S-adenosyl-L-methionine to nm(5)s(2)U34, to form mnm(5)s(2)U34. The polypeptide is tRNA 5-methylaminomethyl-2-thiouridine biosynthesis bifunctional protein MnmC (Shigella boydii serotype 18 (strain CDC 3083-94 / BS512)).